Here is a 206-residue protein sequence, read N- to C-terminus: Small ribosomal subunit protein uS4 (206 aa).

One can recognise an S4 RNA-binding domain in the interval 96–156; that stretch reads GRLDNVVYRM…EKAKKQSRVK (61 aa).

This sequence belongs to the universal ribosomal protein uS4 family. Part of the 30S ribosomal subunit. Contacts protein S5. The interaction surface between S4 and S5 is involved in control of translational fidelity.

In terms of biological role, one of the primary rRNA binding proteins, it binds directly to 16S rRNA where it nucleates assembly of the body of the 30S subunit. Its function is as follows. With S5 and S12 plays an important role in translational accuracy. The sequence is that of Small ribosomal subunit protein uS4 from Salmonella typhi.